The sequence spans 700 residues: Elongation factor G (700 aa).

One can recognise a tr-type G domain in the interval 8–290 (ERYRNIGISA…AVVEFMPSPV (283 aa)). Residues 17 to 24 (AHIDAGKT), 88 to 92 (DTPGH), and 142 to 145 (NKMD) contribute to the GTP site.

It belongs to the TRAFAC class translation factor GTPase superfamily. Classic translation factor GTPase family. EF-G/EF-2 subfamily.

The protein localises to the cytoplasm. Its function is as follows. Catalyzes the GTP-dependent ribosomal translocation step during translation elongation. During this step, the ribosome changes from the pre-translocational (PRE) to the post-translocational (POST) state as the newly formed A-site-bound peptidyl-tRNA and P-site-bound deacylated tRNA move to the P and E sites, respectively. Catalyzes the coordinated movement of the two tRNA molecules, the mRNA and conformational changes in the ribosome. This is Elongation factor G from Albidiferax ferrireducens (strain ATCC BAA-621 / DSM 15236 / T118) (Rhodoferax ferrireducens).